The chain runs to 199 residues: Phosphatidylethanolamine N-methyltransferase (199 aa).

Residues 1–12 lie on the Lumenal side of the membrane; that stretch reads MTRLLGYVDPLD. The segment at residues 13–33 is an intramembrane region (helical); the sequence is PSFVAAVITITFNPLYWNVVA. Residues 34–45 are Lumenal-facing; it reads RWEHKTRKLSRA. The chain crosses the membrane as a helical span at residues 46–66; the sequence is FGSPYLACYSLSVTILLLNFL. Residues 67-93 are Cytoplasmic-facing; it reads RSHCFTQAMLSQPRMESLDTPAAYSLG. A helical transmembrane segment spans residues 94 to 114; that stretch reads LALLGLGVVLVLSSFFALGFA. 98–100 provides a ligand contact to S-adenosyl-L-methionine; it reads GLG. Topologically, residues 115 to 157 are lumenal; it reads GTFLGDYFGILKEARVTVFPFNILDNPMYWGSTANYLGWAIMH. The helical transmembrane segment at 158–178 threads the bilayer; it reads ASPTGLLLTVLVALTYIVALL. At 179 to 199 the chain is on the cytoplasmic side; that stretch reads YEEPFTAEIYRQKASGSHKRS. 180–181 contacts S-adenosyl-L-methionine; the sequence is EE.

It belongs to the class VI-like SAM-binding methyltransferase superfamily. PEMT/PEM2 methyltransferase family. Isoform 2 is N-glycosylated with high-mannose oligosaccharides. As to expression, primarily expressed in liver (at protein level).

The protein resides in the endoplasmic reticulum. It is found in the endoplasmic reticulum membrane. The protein localises to the mitochondrion membrane. The catalysed reaction is a 1,2-diacyl-sn-glycero-3-phospho-N-methylethanolamine + S-adenosyl-L-methionine = a 1,2-diacyl-sn-glycero-3-phospho-N,N-dimethylethanolamine + S-adenosyl-L-homocysteine + H(+). It catalyses the reaction a 1,2-diacyl-sn-glycero-3-phospho-N,N-dimethylethanolamine + S-adenosyl-L-methionine = a 1,2-diacyl-sn-glycero-3-phosphocholine + S-adenosyl-L-homocysteine + H(+). The enzyme catalyses a 1,2-diacyl-sn-glycero-3-phosphoethanolamine + S-adenosyl-L-methionine = a 1,2-diacyl-sn-glycero-3-phospho-N-methylethanolamine + S-adenosyl-L-homocysteine + H(+). It carries out the reaction 1,2-di-(9Z-octadecenoyl)-sn-glycero-3-phosphoethanolamine + S-adenosyl-L-methionine = 1,2-di-(9Z-octadecenoyl)-sn-glycero-3-phospho-N-methylethanolamine + S-adenosyl-L-homocysteine + H(+). The catalysed reaction is 1,2-di-(9Z-octadecenoyl)-sn-glycero-3-phospho-N-methylethanolamine + S-adenosyl-L-methionine = 1,2-di-(9Z-octadecenoyl)-sn-glycero-3-phospho-N,N-dimethylethanolamine + S-adenosyl-L-homocysteine + H(+). It catalyses the reaction 1,2-di-(9Z-octadecenoyl)-sn-glycero-3-phospho-N,N-dimethylethanolamine + S-adenosyl-L-methionine = 1,2-di-(9Z-octadecenoyl)-sn-glycero-3-phosphocholine + S-adenosyl-L-homocysteine + H(+). The enzyme catalyses 1,2-di-(9Z,12Z-octadecadienoyl)-sn-glycero-3-phosphoethanolamine + S-adenosyl-L-methionine = 1,2-di-(9Z,12Z-octadecadienoyl)-sn-glycero-3-phospho-N-methylethanolamine + S-adenosyl-L-homocysteine + H(+). It carries out the reaction 1,2-di-(9Z,12Z-octadecadienoyl)-sn-glycero-3-phospho-N-methylethanolamine + S-adenosyl-L-methionine = 1,2-di-(9Z,12Z-octadecadienoyl)-sn-glycero-3-phospho-N,N-dimethylethanolamine + S-adenosyl-L-homocysteine + H(+). The catalysed reaction is 1,2-di-(9Z,12Z-octadecadienoyl)-sn-glycero-3-phospho-N,N-dimethylethanolamine + S-adenosyl-L-methionine = 1,2-di-(9Z,12Z-octadecadienoyl)-sn-glycero-3-phosphocholine + S-adenosyl-L-homocysteine + H(+). It catalyses the reaction 1,2-di-(9Z,12Z,15Z-octadecatrienoyl)-sn-glycero-3-phosphoethanolamine + S-adenosyl-L-methionine = 1,2-di-(9Z,12Z,15Z-octadecatrienoyl)-sn-glycero-3-phospho-N-methylethanolamine + S-adenosyl-L-homocysteine + H(+). The enzyme catalyses 1,2-di-(9Z,12Z,15Z-octadecatrienoyl)-sn-glycero-3-phospho-N-methylethanolamine + S-adenosyl-L-methionine = 1,2-di-(9Z,12Z,15Z-octadecatrienoyl)-sn-glycero-3-phospho-N,N-dimethylethanolamine + S-adenosyl-L-homocysteine + H(+). It carries out the reaction 1,2-di-(9Z,12Z,15Z-octadecatrienoyl)-sn-glycero-3-phospho-N,N-dimethylethanolamine + S-adenosyl-L-methionine = 1,2-di-(9Z,12Z,15Z-octadecatrienoyl)-sn-glycero-3-phosphocholine + S-adenosyl-L-homocysteine + H(+). The catalysed reaction is 1-hexadecanoyl-2-(4Z,7Z,10Z,13Z,16Z,19Z-docosahexaenoyl)-sn-glycero-3-phosphoethanolamine + S-adenosyl-L-methionine = 1-hexadecanoyl-2-(4Z,7Z,10Z,13Z,16Z,19Z-docosahexaenoyl)-sn-glycero-3-phospho-N-methylethanolamine + S-adenosyl-L-homocysteine + H(+). It catalyses the reaction 1-hexadecanoyl-2-(4Z,7Z,10Z,13Z,16Z,19Z-docosahexaenoyl)-sn-glycero-3-phospho-N-methylethanolamine + S-adenosyl-L-methionine = 1-hexadecanoyl-2-(4Z,7Z,10Z,13Z,16Z,19Z-docosahexaenoyl)-sn-glycero-3-phospho-N,N-dimethylethanolamine + S-adenosyl-L-homocysteine + H(+). The enzyme catalyses 1-hexadecanoyl-2-(4Z,7Z,10Z,13Z,16Z,19Z-docosahexaenoyl)-sn-glycero-3-phospho-N,N-dimethylethanolamine + S-adenosyl-L-methionine = 1-hexadecanoyl-2-(4Z,7Z,10Z,13Z,16Z,19Z-docosahexaenoyl)-sn-glycero-3-phosphocholine + S-adenosyl-L-homocysteine + H(+). It participates in phospholipid metabolism; phosphatidylcholine biosynthesis. Its activity is regulated as follows. The first methylation is rate-limiting. Its function is as follows. Catalyzes the three sequential steps of the methylation pathway for the biosynthesis of phosphatidylcholine, a critical and essential component for membrane structure. Uses S-adenosylmethionine (S-adenosyl-L-methionine, SAM or AdoMet) as the methyl group donor for the methylation of phosphatidylethanolamine (1,2-diacyl-sn-glycero-3-phosphoethanolamine, PE) to phosphatidylmonomethylethanolamine (1,2-diacyl-sn-glycero-3-phospho-N-methylethanolamine, PMME), PMME to phosphatidyldimethylethanolamine (1,2-diacyl-sn-glycero-3-phospho-N,N-dimethylethanolamine, PDME), and PDME to phosphatidylcholine (1,2-diacyl-sn-glycero-3-phosphocholine, PC), producing S-adenosyl-L-homocysteine in each step. Responsible for approximately 30% of hepatic PC with the CDP-choline pathway accounting for the other 70%. Catalyzes the three sequential steps of the methylation of 1,2-diacyl-sn-glycero-3-phospho-N-methylethanolamine (PMME) to 1,2-diacyl-sn-glycero-3-phospho-N,N-dimethylethanolamine (PDME) more efficiently than isoform 2. Induces increase in PC species with longer polyunsaturated chains than isoform 2. Functionally, produces a higher increase in the level of PC species containing long chains with three double bonds than isoform 1. The chain is Phosphatidylethanolamine N-methyltransferase from Homo sapiens (Human).